The sequence spans 216 residues: Transmembrane protein 125 (216 aa).

The next 4 membrane-spanning stretches (helical) occupy residues 32-52, 65-85, 111-131, and 144-164; these read LLCF…GVAL, LAVG…QLMS, AVVV…LAGL, and MLSV…GLLL.

It localises to the membrane. The polypeptide is Transmembrane protein 125 (Tmem125) (Mus musculus (Mouse)).